The chain runs to 186 residues: Lactoylglutathione lyase (186 aa).

One can recognise a VOC domain in the interval 28 to 175 (FMQQTMFRIK…DGYWIELFDR (148 aa)). 2 residues coordinate substrate: Gln31 and Arg35. Gln31 is a Zn(2+) binding site. Glu97 contributes to the Zn(2+) binding site. Substrate is bound by residues Asn101, Arg121, His125, and 155 to 156 (KM). His125 contributes to the Zn(2+) binding site. A Zn(2+)-binding site is contributed by Glu171. Glu171 (proton donor/acceptor) is an active-site residue.

The protein belongs to the glyoxalase I family. It depends on Zn(2+) as a cofactor.

It catalyses the reaction (R)-S-lactoylglutathione = methylglyoxal + glutathione. It participates in secondary metabolite metabolism; methylglyoxal degradation; (R)-lactate from methylglyoxal: step 1/2. Its function is as follows. Catalyzes the conversion of hemimercaptal, formed from methylglyoxal and glutathione, to S-lactoylglutathione. This chain is Lactoylglutathione lyase, found in Cicer arietinum (Chickpea).